Here is a 122-residue protein sequence, read N- to C-terminus: Ribosomal silencing factor RsfS (122 aa).

Belongs to the Iojap/RsfS family. Interacts with ribosomal protein uL14 (rplN).

The protein localises to the cytoplasm. Functions as a ribosomal silencing factor. Interacts with ribosomal protein uL14 (rplN), blocking formation of intersubunit bridge B8. Prevents association of the 30S and 50S ribosomal subunits and the formation of functional ribosomes, thus repressing translation. In Chromobacterium violaceum (strain ATCC 12472 / DSM 30191 / JCM 1249 / CCUG 213 / NBRC 12614 / NCIMB 9131 / NCTC 9757 / MK), this protein is Ribosomal silencing factor RsfS.